We begin with the raw amino-acid sequence, 269 residues long: Hydroxyethylthiazole kinase (269 aa).

M45 is a binding site for substrate. ATP contacts are provided by R121 and T167. Substrate is bound at residue G194.

Belongs to the Thz kinase family. The cofactor is Mg(2+).

It catalyses the reaction 5-(2-hydroxyethyl)-4-methylthiazole + ATP = 4-methyl-5-(2-phosphooxyethyl)-thiazole + ADP + H(+). The protein operates within cofactor biosynthesis; thiamine diphosphate biosynthesis; 4-methyl-5-(2-phosphoethyl)-thiazole from 5-(2-hydroxyethyl)-4-methylthiazole: step 1/1. In terms of biological role, catalyzes the phosphorylation of the hydroxyl group of 4-methyl-5-beta-hydroxyethylthiazole (THZ). The polypeptide is Hydroxyethylthiazole kinase (Bacillus licheniformis (strain ATCC 14580 / DSM 13 / JCM 2505 / CCUG 7422 / NBRC 12200 / NCIMB 9375 / NCTC 10341 / NRRL NRS-1264 / Gibson 46)).